The primary structure comprises 335 residues: Cytoskeleton protein RodZ (335 aa).

Residues 1–111 lie on the Cytoplasmic side of the membrane; the sequence is MNTEATHDQN…LGKRRKKRDG (111 aa). Residues 19–71 form the HTH cro/C1-type domain; the sequence is LRNAREQLGLSQQAVAERLCLKVSTVRDIEEDKAPADLASTFLRGYIRSYARL. The H-T-H motif DNA-binding region spans 30-49; it reads QQAVAERLCLKVSTVRDIEE. Residues 112 to 132 form a helical; Signal-anchor for type II membrane protein membrane-spanning segment; sequence WLMTFTWLVLFVVIGLSGAWW. Residues 133 to 335 lie on the Periplasmic side of the membrane; that stretch reads WQDHKAQQEE…TLNAEQSPAQ (203 aa). The span at 148–164 shows a compositional bias: polar residues; sequence DQSSAELNNNQSQSVPL. A disordered region spans residues 148 to 239; the sequence is DQSSAELNNN…PDGAAPLPTD (92 aa). 2 stretches are compositionally biased toward low complexity: residues 165–205 and 217–239; these read DTST…DPQQ and DTAATPAPAATTTPDGAAPLPTD.

Belongs to the RodZ family.

The protein resides in the cell inner membrane. Cytoskeletal protein that is involved in cell-shape control through regulation of the length of the long axis. This chain is Cytoskeleton protein RodZ, found in Escherichia coli O6:K15:H31 (strain 536 / UPEC).